We begin with the raw amino-acid sequence, 115 residues long: Ribosome-binding factor A (115 aa).

Belongs to the RbfA family. In terms of assembly, monomer. Binds 30S ribosomal subunits, but not 50S ribosomal subunits or 70S ribosomes.

It localises to the cytoplasm. Functionally, one of several proteins that assist in the late maturation steps of the functional core of the 30S ribosomal subunit. Associates with free 30S ribosomal subunits (but not with 30S subunits that are part of 70S ribosomes or polysomes). Required for efficient processing of 16S rRNA. May interact with the 5'-terminal helix region of 16S rRNA. In Staphylococcus carnosus (strain TM300), this protein is Ribosome-binding factor A.